The chain runs to 529 residues: MSIMGLKVNVSAIFMAVLLTLQTPTGQIHWGNLSKIGVVGIGSASYKVMTRSSHQSLVIKLMPNITLLNNCTRVEIAEYRRLLRTVLEPIRDALNAMTQNIRLVQSVASSRRHKRFAGVVLAGAALGVATAAQITAGIALHQSMLSSQAIDNLRASLETTNQAIEAIRQAGQEMILAVQGVQDYINNELIPSMNQLSCDLIGQKLGLKLLRYYTEILSLFGPSLRDPISAEISIQALSYALGGDINKVLEKLGYSGGDLLGILESRGIKARITHVDTESYFIVLSIAYPTLSEIKEVIVHRLEGVSYNIGSQEWYTTVPKYVATQGYLISNFDESSCTFMPEGTVCSQNALYPMSPLLQECLRGSTKSCARTLVSGSFGNRFILSQGNLIANCASILCKCYTTGTIIRQDPDKILTYIAADHCPVVEVNGVTIQVGSRRYPDAVDLHRIDLGPPISLERLDVGTNLGSAIAKLEDAKELLESSDQILRSMKGLSSTSIVYILIAVCLGGLIGIPALICCCRGRCNKKGE.

Positions 1-26 are cleaved as a signal peptide; sequence MSIMGLKVNVSAIFMAVLLTLQTPTG. Topologically, residues 27 to 490 are extracellular; sequence QIHWGNLSKI…ESSDQILRSM (464 aa). 3 N-linked (GlcNAc...) asparagine; by host glycosylation sites follow: N32, N64, and N70. Residues 72 to 98 are HRC; sequence TRVEIAEYRRLLRTVLEPIRDALNAMT. The tract at residues 116 to 141 is fusion peptide; it reads FAGVVLAGAALGVATAAQITAGIALH. Positions 141–169 form a coiled coil; that stretch reads HQSMLSSQAIDNLRASLETTNQAIEAIRQ. The interval 142 to 218 is HRA; that stretch reads QSMLSSQAID…LLRYYTEILS (77 aa). Cystine bridges form between C337–C346, C361–C369, C393–C398, and C400–C423. The interval 370-447 is interaction with hemagglutinin; sequence ARTLVSGSFG…RRYPDAVDLH (78 aa). The segment at 448–497 is HRB; it reads RIDLGPPISLERLDVGTNLGSAIAKLEDAKELLESSDQILRSMKGLSSTS. The stretch at 465–490 forms a coiled coil; that stretch reads NLGSAIAKLEDAKELLESSDQILRSM. The helical transmembrane segment at 491-521 threads the bilayer; that stretch reads KGLSSTSIVYILIAVCLGGLIGIPALICCCR. The Cytoplasmic segment spans residues 522–529; it reads GRCNKKGE.

It belongs to the paramyxoviruses fusion glycoprotein family. Homotrimer of disulfide-linked F1-F2. The inactive precursor F0 is glycosylated and proteolytically cleaved into F1 and F2 to be functionally active. The cleavage is mediated by host furin during the transport and maturation of the polypeptide.

The protein localises to the virion membrane. Its subcellular location is the host cell membrane. Its function is as follows. Class I viral fusion protein. Under the current model, the protein has at least 3 conformational states: pre-fusion native state, pre-hairpin intermediate state, and post-fusion hairpin state. During viral and plasma cell membrane fusion, the heptad repeat (HR) regions assume a trimer-of-hairpins structure, positioning the fusion peptide in close proximity to the C-terminal region of the ectodomain. The formation of this structure appears to drive apposition and subsequent fusion of viral and plasma cell membranes. Directs fusion of viral and cellular membranes leading to delivery of the nucleocapsid into the cytoplasm. This fusion is pH independent and occurs directly at the outer cell membrane. During viral entry or virus-mediated fusion between infected cells and neighboring susceptible cells, the head domain of the H protein initially binds to its receptor and then the stalk region of the H protein transmits the fusion-triggering signal to the F protein. Upon HN binding to its cellular receptor, the hydrophobic fusion peptide is unmasked and interacts with the cellular membrane, inducing the fusion between cell and virion membranes. Later in infection, F proteins expressed at the plasma membrane of infected cells could mediate fusion with adjacent cells to form syncytia, a cytopathic effect that could lead to tissue necrosis. Some hyperfusogenic isolates can induce membrane fusion in SLAM- and nectin-4-negative cells and are linked to fatal subacute sclerosing panencephalitis (SSPE) or measles inclusion body encephalitis (MIBE). The neuropathogenicity is closely associated with enhanced propagation mediated by cell-to-cell fusion in the brain, which is principally regulated by hyperfusogenic mutations of the viral F protein. Cell-to-cell transmission of the virus also occurs with hyperfusogenic isolates. This is Fusion glycoprotein F0 (F) from Homo sapiens (Human).